The sequence spans 100 residues: MELTPREKDKLLLASAGMIAERRKARGLKLNYPEAVALICFEIMEGARDGRTVADLMNYGRTILTADDVMEGVPEMIPDVQVECTFPDGTKLVSIHEPIV.

Belongs to the urease gamma subunit family. As to quaternary structure, heterotrimer of UreA (gamma), UreB (beta) and UreC (alpha) subunits. Three heterotrimers associate to form the active enzyme.

It localises to the cytoplasm. It catalyses the reaction urea + 2 H2O + H(+) = hydrogencarbonate + 2 NH4(+). The protein operates within nitrogen metabolism; urea degradation; CO(2) and NH(3) from urea (urease route): step 1/1. This chain is Urease subunit gamma, found in Aliivibrio fischeri (strain ATCC 700601 / ES114) (Vibrio fischeri).